A 514-amino-acid chain; its full sequence is tRNA-2-methylthio-N(6)-dimethylallyladenosine synthase (514 aa).

The MTTase N-terminal domain occupies 68–186 (RTFLIKTYGC…LPEILEEAYL (119 aa)). Positions 77, 113, 147, 223, 227, and 230 each coordinate [4Fe-4S] cluster. One can recognise a Radical SAM core domain in the interval 209-439 (RDGHIKAWVN…NKKVGIYSQQ (231 aa)). The region spanning 442–505 (SQYEGKIVTV…QYSLNGTFIQ (64 aa)) is the TRAM domain.

It belongs to the methylthiotransferase family. MiaB subfamily. Monomer. It depends on [4Fe-4S] cluster as a cofactor.

The protein resides in the cytoplasm. The enzyme catalyses N(6)-dimethylallyladenosine(37) in tRNA + (sulfur carrier)-SH + AH2 + 2 S-adenosyl-L-methionine = 2-methylsulfanyl-N(6)-dimethylallyladenosine(37) in tRNA + (sulfur carrier)-H + 5'-deoxyadenosine + L-methionine + A + S-adenosyl-L-homocysteine + 2 H(+). Catalyzes the methylthiolation of N6-(dimethylallyl)adenosine (i(6)A), leading to the formation of 2-methylthio-N6-(dimethylallyl)adenosine (ms(2)i(6)A) at position 37 in tRNAs that read codons beginning with uridine. This is tRNA-2-methylthio-N(6)-dimethylallyladenosine synthase from Staphylococcus epidermidis (strain ATCC 35984 / DSM 28319 / BCRC 17069 / CCUG 31568 / BM 3577 / RP62A).